Consider the following 310-residue polypeptide: GMP synthase [glutamine-hydrolyzing] subunit B (310 aa).

In terms of domain architecture, GMPS ATP-PPase spans 1 to 187 (MSFSDYISRI…LGLPTDIQPF (187 aa)). 27-33 (SGGQDSS) is an ATP binding site.

Heterodimer composed of a glutamine amidotransferase subunit (A) and a GMP-binding subunit (B).

The enzyme catalyses XMP + L-glutamine + ATP + H2O = GMP + L-glutamate + AMP + diphosphate + 2 H(+). The protein operates within purine metabolism; GMP biosynthesis; GMP from XMP (L-Gln route): step 1/1. Its function is as follows. Catalyzes the synthesis of GMP from XMP. In Thermoplasma volcanium (strain ATCC 51530 / DSM 4299 / JCM 9571 / NBRC 15438 / GSS1), this protein is GMP synthase [glutamine-hydrolyzing] subunit B (guaAB).